The following is a 302-amino-acid chain: Syntaxin-17 (302 aa).

Residue Ser2 is modified to N-acetylserine. Topologically, residues 2–228 (SEDEEKVKLR…KNLGKAAKYK (227 aa)) are cytoplasmic. Lys41 carries the N6-acetyllysine modification. The stretch at 53–123 (EEHINAGRTV…EELKKQFNDE (71 aa)) forms a coiled coil. Phosphotyrosine; by ABL1 is present on Tyr157. The region spanning 162 to 224 (IPQDQNAAES…EEGTKNLGKA (63 aa)) is the t-SNARE coiled-coil homology domain. Residues 229 to 249 (LAALPVAGALIGGMVGGPIGL) form a helical membrane-spanning segment. Residues 229–275 (LAALPVAGALIGGMVGGPIGLLAGFKVAGIAAALGGGVLGFTGGKLI) are necessary and sufficient for localization to autophagosome. The Lumenal segment spans residues 250 to 254 (LAGFK). The chain crosses the membrane as a helical span at residues 255-275 (VAGIAAALGGGVLGFTGGKLI). The Cytoplasmic portion of the chain corresponds to 276–302 (QRKKQKMMEKLTSSCPDLPSQTDKKCS). Ser289 bears the Phosphoserine mark. The Endoplasmic reticulum retention signal signature appears at 299–302 (KKCS).

Belongs to the syntaxin family. In terms of assembly, forms a SNARE complex composed of VAMP8, SNAP29 and STX17 involved in fusion of autophagosome with lysosome. Interacts with VAMP7 and VTI1B. Probably interacts with BET1, SCFD1 and SEC22B. Interacts with PTPN2 and ABL1; involved in STX17 phosphorylation. Interacts with COPB1. Interacts with TMED9 and TMED10; the interaction is direct. Interacts with ATG14. Interacts with RUBCNL/PACER; promoting targeting of RUBCNL/PACER to autophagosome. Interacts with VAMP8, SNAP29, VPS39 and VPS41; these interactions are increased in the absence of TMEM39A. Interacts with IRGM; promoting STX17 recruitment to autophagosomes. Interacts with ATG8 proteins GABARAP and MAP1LC3B. Interacts with RNF115; this interaction enhances STX17 stability which in turn promotes autophagosome maturation. Interacts with RAB39A (GTP-bound); the interaction promotes autophagosome-lysosome membrane fusion driven by STX17-SNAP29-VAMP8. Interacts with RAB39B; the interaction may promote a different fonction in autophagy as compared with RAB39A. (Microbial infection) The interactions with VAMP8, SNAP29 and VPS41 are decreased in presence of SARS coronavirus-2/SARS-CoV-2 ORF3A protein. Post-translationally, phosphorylated at Tyr-157 probably by ABL1. Dephosphorylation by PTPN2; regulates exit from the endoplasmic reticulum. In terms of processing, (Microbial infection) Cleaved by the L.pneumophila serine protease Lpg1137, impairing endoplasmic reticulum-mitochondria communication, leading to inhibit autophagy.

The protein resides in the endoplasmic reticulum membrane. It localises to the smooth endoplasmic reticulum membrane. Its subcellular location is the endoplasmic reticulum-Golgi intermediate compartment membrane. The protein localises to the cytoplasmic vesicle. It is found in the autophagosome membrane. The protein resides in the COPII-coated vesicle membrane. It localises to the cytoplasm. Its subcellular location is the cytosol. The protein localises to the mitochondrion membrane. It is found in the autolysosome membrane. Its function is as follows. SNAREs, soluble N-ethylmaleimide-sensitive factor-attachment protein receptors, are essential proteins for fusion of cellular membranes. SNAREs localized on opposing membranes assemble to form a trans-SNARE complex, an extended, parallel four alpha-helical bundle that drives membrane fusion. STX17 is a SNARE of the autophagosome involved in autophagy through the direct control of autophagosome membrane fusion with the lysosome membrane. May also play a role in the early secretory pathway where it may maintain the architecture of the endoplasmic reticulum-Golgi intermediate compartment/ERGIC and Golgi and/or regulate transport between the endoplasmic reticulum, the ERGIC and the Golgi. This chain is Syntaxin-17, found in Homo sapiens (Human).